A 290-amino-acid chain; its full sequence is Pyridoxal kinase PdxY (290 aa).

Substrate contacts are provided by residues Ser-12 and 47–48 (TQ). Residues Asp-114, Glu-151, Lys-184, and 211 to 214 (RPLL) contribute to the ATP site. A substrate-binding site is contributed by Asp-225.

This sequence belongs to the pyridoxine kinase family. PdxY subfamily. As to quaternary structure, homodimer. Mg(2+) serves as cofactor.

It catalyses the reaction pyridoxal + ATP = pyridoxal 5'-phosphate + ADP + H(+). The protein operates within cofactor metabolism; pyridoxal 5'-phosphate salvage; pyridoxal 5'-phosphate from pyridoxal: step 1/1. Functionally, pyridoxal kinase involved in the salvage pathway of pyridoxal 5'-phosphate (PLP). Catalyzes the phosphorylation of pyridoxal to PLP. This chain is Pyridoxal kinase PdxY, found in Pseudomonas putida (strain W619).